The primary structure comprises 165 residues: Choriogonadotropin subunit beta 3 (165 aa).

The N-terminal stretch at 1–20 is a signal peptide; sequence MEMFQGLLLLLLLSMGGTWA. Cystine bridges form between cysteine 29-cysteine 77, cysteine 43-cysteine 92, cysteine 46-cysteine 130, cysteine 54-cysteine 108, cysteine 58-cysteine 110, and cysteine 113-cysteine 120. N-linked (GlcNAc...) asparagine glycans are attached at residues asparagine 33 and asparagine 50. Residues 131–165 form a disordered region; sequence DDPRFQDSSSSKAPPPSLPSPSRLPGPSDTPILPQ. Residues serine 141, serine 147, serine 152, and serine 158 are each glycosylated (O-linked (GalNAc...) serine). The segment covering 143 to 154 has biased composition (pro residues); sequence APPPSLPSPSRL.

It belongs to the glycoprotein hormones subunit beta family. Heterodimer of a common alpha chain identical in LH, FSH, TSH and HCG and a unique beta chain distinct in each of the hormones. As to expression, high expression in the placenta throughout pregnancy.

It is found in the secreted. Its function is as follows. Beta subunit of the human chorionic gonadotropin (hCG). hCG is a complex glycoprotein composed of two glycosylated subunits alpha and beta which are non-covalently associated. The alpha subunit is identical to those in the pituitary gonadotropin hormones (LH, FSH and TSH). The beta subunits are distinct in each of the hormones and confer receptor and biological specificity. Has an essential role in pregnancy and maternal adaptation. Stimulates the ovaries to synthesize the steroids that are essential for the maintenance of pregnancy. This is Choriogonadotropin subunit beta 3 (CGB3) from Homo sapiens (Human).